The sequence spans 92 residues: Cell wall protein CWP2 (92 aa).

The signal sequence occupies residues 1 to 20 (MQFSTVASVAFVALANFVAA). The stretch at 24–37 (AAISQITDGQIQAT) is one PIR1/2/3 repeat. Residues 41 to 60 (TTEATTTAAPSSTVETVSPS) are disordered. Asn-71 is lipidated: GPI-anchor amidated asparagine. The propeptide at 72 to 92 (GAAKAAVGMGAGALAAAAMLL) is removed in mature form.

The protein belongs to the SRP1/TIP1 family. Post-translationally, extensively O-glycosylated. The GPI-anchor is attached to the protein in the endoplasmic reticulum and serves to target the protein to the cell surface. There, the glucosamine-inositol phospholipid moiety is cleaved off and the GPI-modified mannoprotein is covalently attached via its lipidless GPI glycan remnant to the 1,6-beta-glucan of the outer cell wall layer. In terms of processing, covalently linked to beta-1,3-glucan of the inner cell wall layer via an alkali-sensitive ester linkage between the gamma-carboxyl group of glutamic acids, arising from a specific glutamine within the PIR1/2/3 repeat, and hydroxyl groups of glucoses of beta-1,3-glucan chains.

The protein localises to the secreted. It is found in the cell wall. It localises to the membrane. In terms of biological role, component of the cell wall. This chain is Cell wall protein CWP2 (CWP2), found in Saccharomyces cerevisiae (strain ATCC 204508 / S288c) (Baker's yeast).